We begin with the raw amino-acid sequence, 284 residues long: Urease accessory protein UreD (284 aa).

The interval 1–28 (MQSEQQAIGASGCEDAQQPVRQQRARGR) is disordered.

This sequence belongs to the UreD family. UreD, UreF and UreG form a complex that acts as a GTP-hydrolysis-dependent molecular chaperone, activating the urease apoprotein by helping to assemble the nickel containing metallocenter of UreC. The UreE protein probably delivers the nickel.

Its subcellular location is the cytoplasm. Its function is as follows. Required for maturation of urease via the functional incorporation of the urease nickel metallocenter. The sequence is that of Urease accessory protein UreD from Agrobacterium fabrum (strain C58 / ATCC 33970) (Agrobacterium tumefaciens (strain C58)).